A 56-amino-acid polypeptide reads, in one-letter code: Small ribosomal subunit protein bS21 (56 aa).

Belongs to the bacterial ribosomal protein bS21 family.

The sequence is that of Small ribosomal subunit protein bS21 from Dictyoglomus thermophilum (strain ATCC 35947 / DSM 3960 / H-6-12).